The primary structure comprises 1411 residues: DNA-directed RNA polymerase subunit beta' (1411 aa).

Cys69, Cys71, Cys84, and Cys87 together coordinate Zn(2+). Asp461, Asp463, and Asp465 together coordinate Mg(2+). Positions 809, 883, 890, and 893 each coordinate Zn(2+).

The protein belongs to the RNA polymerase beta' chain family. The RNAP catalytic core consists of 2 alpha, 1 beta, 1 beta' and 1 omega subunit. When a sigma factor is associated with the core the holoenzyme is formed, which can initiate transcription. It depends on Mg(2+) as a cofactor. The cofactor is Zn(2+).

The enzyme catalyses RNA(n) + a ribonucleoside 5'-triphosphate = RNA(n+1) + diphosphate. Functionally, DNA-dependent RNA polymerase catalyzes the transcription of DNA into RNA using the four ribonucleoside triphosphates as substrates. In Ehrlichia ruminantium (strain Welgevonden), this protein is DNA-directed RNA polymerase subunit beta'.